A 206-amino-acid chain; its full sequence is Threonine efflux protein (206 aa).

Residues 1-21 (MMMLFFTVAMVHIVALMSPGP) traverse the membrane as a helical segment. Residues 22 to 43 (DFFFVSQTAVSRSRKEAMMGVL) are Periplasmic-facing. The chain crosses the membrane as a helical span at residues 44–64 (GITCGVMVWAGVALLGLHLII). At 65–66 (EK) the chain is on the cytoplasmic side. A helical transmembrane segment spans residues 67–87 (MAWLHTIIMVGGGLYLCWMGY). The Periplasmic portion of the chain corresponds to 88 to 149 (QMLRGALKKQ…VGDNVGAAAR (62 aa)). A helical transmembrane segment spans residues 150–173 (WGIFALITLETLAWFTVVASLFAL). Residues 174-206 (PKMRRGYQRLAKWIDGFAGALFAGFGIHLIISR) are Cytoplasmic-facing.

Belongs to the Rht family.

It is found in the cell inner membrane. Functionally, conducts the efflux of threonine. The sequence is that of Threonine efflux protein (rhtC) from Salmonella typhimurium (strain LT2 / SGSC1412 / ATCC 700720).